We begin with the raw amino-acid sequence, 815 residues long: Ferripyoverdine receptor (815 aa).

An N-terminal signal peptide occupies residues 1-43 (MPAPHGLSPLSKAFLMRRAFQRRILPHSLAMALSLPLAGYVQA). The TBDR plug domain occupies 161–271 (TPRETPQSIT…LGATINLIRK (111 aa)). The region spanning 276-815 (EFKGHVELGA…NLMFSTRWDF (540 aa)) is the TBDR beta-barrel domain. The TonB C-terminal box signature appears at 798-815 (SASYGDPRNLMFSTRWDF).

The protein belongs to the TonB-dependent receptor family.

It is found in the cell outer membrane. Functionally, receptor for the siderophore ferripyoverdine. The polypeptide is Ferripyoverdine receptor (fpvA) (Pseudomonas aeruginosa (strain ATCC 15692 / DSM 22644 / CIP 104116 / JCM 14847 / LMG 12228 / 1C / PRS 101 / PAO1)).